The primary structure comprises 63 residues: UPF0434 protein BAV2101 (63 aa).

Belongs to the UPF0434 family.

The chain is UPF0434 protein BAV2101 from Bordetella avium (strain 197N).